The following is an 81-amino-acid chain: Photosystem I iron-sulfur center (81 aa).

4Fe-4S ferredoxin-type domains lie at 2–31 (SHAV…MVPW) and 39–68 (IASS…IRVY). [4Fe-4S] cluster is bound by residues Cys-11, Cys-14, Cys-17, Cys-21, Cys-48, Cys-51, Cys-54, and Cys-58.

The cyanobacterial PSI reaction center is composed of one copy each of PsaA,B,C,D,E,F,I,J,K,L,M and X, and forms trimeric complexes. Requires [4Fe-4S] cluster as cofactor.

Its subcellular location is the cellular thylakoid membrane. It carries out the reaction reduced [plastocyanin] + hnu + oxidized [2Fe-2S]-[ferredoxin] = oxidized [plastocyanin] + reduced [2Fe-2S]-[ferredoxin]. In terms of biological role, apoprotein for the two 4Fe-4S centers FA and FB of photosystem I (PSI); essential for photochemical activity. FB is the terminal electron acceptor of PSI, donating electrons to ferredoxin. The C-terminus interacts with PsaA/B/D and helps assemble the protein into the PSI complex. Required for binding of PsaD and PsaE to PSI. PSI is a plastocyanin/cytochrome c6-ferredoxin oxidoreductase, converting photonic excitation into a charge separation, which transfers an electron from the donor P700 chlorophyll pair to the spectroscopically characterized acceptors A0, A1, FX, FA and FB in turn. The sequence is that of Photosystem I iron-sulfur center from Prochlorococcus marinus (strain NATL2A).